A 250-amino-acid polypeptide reads, in one-letter code: DNA polymerase sliding clamp (250 aa).

This sequence belongs to the PCNA family. In terms of assembly, homotrimer. The subunits circularize to form a toroid; DNA passes through its center. Replication factor C (RFC) is required to load the toroid on the DNA.

In terms of biological role, sliding clamp subunit that acts as a moving platform for DNA processing. Responsible for tethering the catalytic subunit of DNA polymerase and other proteins to DNA during high-speed replication. In Methanococcus maripaludis (strain DSM 14266 / JCM 13030 / NBRC 101832 / S2 / LL), this protein is DNA polymerase sliding clamp.